The chain runs to 620 residues: Magnesium-chelatase 67 kDa subunit (620 aa).

Ser-33–Ser-40 is a binding site for ATP. The interval Ala-272–Thr-322 is disordered. A compositionally biased stretch (acidic residues) spans Gln-296 to Thr-322. A VWFA domain is found at Leu-432–Ser-620.

This sequence belongs to the Mg-chelatase subunits D/I family.

The catalysed reaction is protoporphyrin IX + Mg(2+) + ATP + H2O = Mg-protoporphyrin IX + ADP + phosphate + 3 H(+). It functions in the pathway porphyrin-containing compound metabolism; bacteriochlorophyll biosynthesis. Functionally, involved in bacteriochlorophyll biosynthesis; introduces a magnesium ion into protoporphyrin IX to yield Mg-protoporphyrin IX. This is Magnesium-chelatase 67 kDa subunit (bchD) from Chlorobaculum tepidum (strain ATCC 49652 / DSM 12025 / NBRC 103806 / TLS) (Chlorobium tepidum).